A 277-amino-acid polypeptide reads, in one-letter code: Leucine-rich repeat-containing protein 10 (277 aa).

LRR repeat units lie at residues 53 to 74 (ELVKLYLSDNHLNSLPPELGQL), 76 to 97 (NLQILALDFNNFKALPQVVCTL), 99 to 120 (QLCILYLGNNKLCDLPSELSLL), 122 to 143 (NLRTLWIEANCLTQLPDVVCEL), 145 to 167 (LLKTLHAGSNALRLLPGQLRRLQ), 168 to 189 (ELRTIWLSGNRLTDFPTVLLHM), and 191 to 212 (FLEVIDVDWNSIRYFPSLAHLS).

It is found in the nucleus. In terms of biological role, may play important roles in cardiac development and/or cardiac function. This Homo sapiens (Human) protein is Leucine-rich repeat-containing protein 10 (LRRC10).